The primary structure comprises 477 residues: Cysteine--tRNA ligase (477 aa).

Cys28 contributes to the Zn(2+) binding site. Positions 30–40 (PTVYDYAHIGN) match the 'HIGH' region motif. Zn(2+)-binding residues include Cys213, His238, and Glu242. The short motif at 270–274 (KMSKS) is the 'KMSKS' region element. Lys273 provides a ligand contact to ATP.

This sequence belongs to the class-I aminoacyl-tRNA synthetase family. Monomer. Zn(2+) is required as a cofactor.

It localises to the cytoplasm. It carries out the reaction tRNA(Cys) + L-cysteine + ATP = L-cysteinyl-tRNA(Cys) + AMP + diphosphate. The protein is Cysteine--tRNA ligase (cysS) of Chlamydia trachomatis serovar D (strain ATCC VR-885 / DSM 19411 / UW-3/Cx).